Here is an 821-residue protein sequence, read N- to C-terminus: Spindle apparatus protein lin-5 (821 aa).

Positions 161–199 (EASSGFRTPKRNNYSLTSLQTPTATARRLRTASSTARRS) are disordered. Over residues 162–180 (ASSGFRTPKRNNYSLTSLQ) the composition is skewed to polar residues. Over residues 181-199 (TPTATARRLRTASSTARRS) the composition is skewed to low complexity. Positions 211 to 634 (KFMRSERELK…REKESAEIKK (424 aa)) form a coiled coil. Disordered regions lie at residues 736-758 (RSES…FTPS) and 779-821 (LKCS…SKKQ).

In terms of assembly, interacts with gpr-1; gpr-1 forms a complex with gpr-2 and GDP-bound goa-1.

It is found in the cytoplasm. The protein resides in the cell cortex. The protein localises to the cytoskeleton. It localises to the spindle. Its subcellular location is the chromosome. It is found in the centromere. The protein resides in the kinetochore. The protein localises to the microtubule organizing center. It localises to the centrosome. Essential component of the spindle apparatus required for spindle positioning and chromosome movement. Acts to recruit or anchor gpr-1/gpr-2 complex to the spindle and cortex. Also involved, directly or indirectly, in cytokinesis and in the coupling of DNA replication, centrosome duplication and mitotic division. In Caenorhabditis elegans, this protein is Spindle apparatus protein lin-5 (lin-5).